Here is a 452-residue protein sequence, read N- to C-terminus: Chromosomal replication initiator protein DnaA (452 aa).

Residues 1–72 form a domain I, interacts with DnaA modulators region; it reads MPDMLTLWTD…LVEYAYQAAH (72 aa). The interval 72–114 is domain II; it reads HEDIQPVLILENERQQQATLKAKTAPVAAGEPVEPTPTFMKET. The segment at 115–331 is domain III, AAA+ region; it reads ALNSRYTFDT…GALARVQAYS (217 aa). Positions 159, 161, 162, and 163 each coordinate ATP. Residues 332–452 form a domain IV, binds dsDNA region; that stretch reads QLMHQPIATD…IDSLKDDLRR (121 aa).

This sequence belongs to the DnaA family. Oligomerizes as a right-handed, spiral filament on DNA at oriC.

The protein localises to the cytoplasm. In terms of biological role, plays an essential role in the initiation and regulation of chromosomal replication. ATP-DnaA binds to the origin of replication (oriC) to initiate formation of the DNA replication initiation complex once per cell cycle. Binds the DnaA box (a 9 base pair repeat at the origin) and separates the double-stranded (ds)DNA. Forms a right-handed helical filament on oriC DNA; dsDNA binds to the exterior of the filament while single-stranded (ss)DNA is stabiized in the filament's interior. The ATP-DnaA-oriC complex binds and stabilizes one strand of the AT-rich DNA unwinding element (DUE), permitting loading of DNA polymerase. After initiation quickly degrades to an ADP-DnaA complex that is not apt for DNA replication. Binds acidic phospholipids. In Levilactobacillus brevis (strain ATCC 367 / BCRC 12310 / CIP 105137 / JCM 1170 / LMG 11437 / NCIMB 947 / NCTC 947) (Lactobacillus brevis), this protein is Chromosomal replication initiator protein DnaA.